Reading from the N-terminus, the 64-residue chain is Alpha-mammal toxin BmK-M8 (64 aa).

Positions 2–64 (RDAYIADSEN…ERIKEPGKCG (63 aa)) constitute an LCN-type CS-alpha/beta domain. Disulfide bonds link C12/C63, C16/C36, C22/C46, and C26/C48.

This sequence belongs to the long (4 C-C) scorpion toxin superfamily. Sodium channel inhibitor family. Alpha subfamily. In terms of tissue distribution, expressed by the venom gland.

It is found in the secreted. Its function is as follows. Alpha toxins bind voltage-independently at site-3 of sodium channels (Nav) and inhibit the inactivation of the activated channels, thereby blocking neuronal transmission. This acidic toxin has a weak toxicity and is active against mammals. This chain is Alpha-mammal toxin BmK-M8, found in Olivierus martensii (Manchurian scorpion).